The primary structure comprises 281 residues: Para-Rep C1 (281 aa).

Residues Thr-3–Leu-97 enclose the CRESS-DNA virus Rep endonuclease domain. An RCR-1 motif is present at residues Cys-10 to Leu-13. 2 residues coordinate a divalent metal cation: Glu-36 and His-42. The RCR-2 signature appears at His-42–Gln-44. The Nuclear localization signal signature appears at Lys-51–Lys-71. Tyr-80 acts as the For DNA cleavage activity in catalysis. The short motif at Tyr-80–Lys-83 is the RCR-3 element. Glu-85 serves as a coordination point for a divalent metal cation. Positions Leu-97–Asn-103 match the Nuclear localization signal motif. Gly-173–Thr-181 lines the ATP pocket.

It belongs to the nanoviridea/circoviridae replication-associated protein family. As to quaternary structure, homooligomer (Potential). Rep binds to repeated DNA motifs (iterons). Mg(2+) serves as cofactor. Mn(2+) is required as a cofactor.

The protein localises to the host nucleus. The catalysed reaction is ATP + H2O = ADP + phosphate + H(+). Its function is as follows. Initiates and terminates the replication only of its own subviral DNA molecule. The closed circular ssDNA genome is first converted to a superhelical dsDNA. Rep binds a specific hairpin at the genome origin of replication. Introduces an endonucleolytic nick within the intergenic region of the genome, thereby initiating the rolling circle replication (RCR). Following cleavage, binds covalently to the 5'-phosphate of DNA as a tyrosyl ester. The cleavage gives rise to a free 3'-OH that serves as a primer for the cellular DNA polymerase. The polymerase synthesizes the (+) strand DNA by rolling circle mechanism. After one round of replication, a Rep-catalyzed nucleotidyl transfer reaction releases a circular single-stranded virus genome, thereby terminating the replication. Displays origin-specific DNA cleavage, nucleotidyl transferase, ATPase and helicase activities. The sequence is that of Para-Rep C1 (C1) from Milk vetch dwarf C1 alphasatellite (MVDC1A).